Here is a 342-residue protein sequence, read N- to C-terminus: Fructose-1,6-bisphosphatase class 1 (342 aa).

Mg(2+) contacts are provided by Glu97, Asp119, Leu121, and Asp122. Residues Asp122–Ser125, Asn215, Tyr247, and Lys280 each bind substrate. Glu286 contacts Mg(2+).

It belongs to the FBPase class 1 family. As to quaternary structure, homotetramer. Requires Mg(2+) as cofactor.

The protein localises to the cytoplasm. It carries out the reaction beta-D-fructose 1,6-bisphosphate + H2O = beta-D-fructose 6-phosphate + phosphate. The protein operates within carbohydrate biosynthesis; gluconeogenesis. The chain is Fructose-1,6-bisphosphatase class 1 from Leptospira interrogans serogroup Icterohaemorrhagiae serovar copenhageni (strain Fiocruz L1-130).